Here is a 60-residue protein sequence, read N- to C-terminus: Cytochrome c oxidase subunit 9, mitochondrial (60 aa).

Residues 1-18 (MSAIAPITGSLKKRIMKD) are Mitochondrial matrix-facing. Residues 19-37 (IAVGMGLGTVLGSYWWWGF) traverse the membrane as a helical segment. At 38–57 (HKPKIAARENYYTQLAEQKA) the chain is on the mitochondrial intermembrane side. The propeptide at 58 to 60 (AEE) is removed in mature form.

This sequence belongs to the fungal cytochrome c oxidase subunit 7a family. As to quaternary structure, component of the cytochrome c oxidase (complex IV, CIV), a multisubunit enzyme composed of a catalytic core of 3 subunits and several supernumerary subunits. The complex exists as a monomer or a dimer and forms supercomplexes (SCs) in the inner mitochondrial membrane with ubiquinol-cytochrome c oxidoreductase (cytochrome b-c1 complex, complex III, CIII).

The protein localises to the mitochondrion inner membrane. The protein operates within energy metabolism; oxidative phosphorylation. In terms of biological role, component of the cytochrome c oxidase, the last enzyme in the mitochondrial electron transport chain which drives oxidative phosphorylation. The respiratory chain contains 3 multisubunit complexes succinate dehydrogenase (complex II, CII), ubiquinol-cytochrome c oxidoreductase (cytochrome b-c1 complex, complex III, CIII) and cytochrome c oxidase (complex IV, CIV), that cooperate to transfer electrons derived from NADH and succinate to molecular oxygen, creating an electrochemical gradient over the inner membrane that drives transmembrane transport and the ATP synthase. Cytochrome c oxidase is the component of the respiratory chain that catalyzes the reduction of oxygen to water. Electrons originating from reduced cytochrome c in the intermembrane space (IMS) are transferred via the dinuclear copper A center (CU(A)) of subunit 2 and heme A of subunit 1 to the active site in subunit 1, a binuclear center (BNC) formed by heme A3 and copper B (CU(B)). The BNC reduces molecular oxygen to 2 water molecules using 4 electrons from cytochrome c in the IMS and 4 protons from the mitochondrial matrix. The chain is Cytochrome c oxidase subunit 9, mitochondrial (COX9) from Eremothecium gossypii (strain ATCC 10895 / CBS 109.51 / FGSC 9923 / NRRL Y-1056) (Yeast).